A 578-amino-acid polypeptide reads, in one-letter code: Asparagine synthetase [glutamine-hydrolyzing] 2 (578 aa).

The active-site For GATase activity is the C2. Positions 2 to 185 (CGILAVLGCI…PGHIYSSKQG (184 aa)) constitute a Glutamine amidotransferase type-2 domain. L-glutamine-binding positions include 50–54 (RLAII), 75–77 (NGE), and D98. One can recognise an Asparagine synthetase domain in the interval 210-450 (LRNAFEKAVI…LPKHILYRQK (241 aa)). ATP contacts are provided by residues L231, I267, and 341–342 (SG).

Expressed in the vascular region adjacent to leaf mesophyll cells in the companion cell-sieve tube element complex.

The catalysed reaction is L-aspartate + L-glutamine + ATP + H2O = L-asparagine + L-glutamate + AMP + diphosphate + H(+). It participates in amino-acid biosynthesis; L-asparagine biosynthesis. In terms of biological role, essential for nitrogen assimilation, distribution and remobilization within the plant via the phloem. The sequence is that of Asparagine synthetase [glutamine-hydrolyzing] 2 (ASN2) from Arabidopsis thaliana (Mouse-ear cress).